The chain runs to 138 residues: MPTINQLVRKGRVSKVETSKSPALNKGYNSFKKEHTNVSSPQKRGVCTRVGTMTPKKPNSALRKYARVRLTNGIEVTAYIPGIGHNLQEHSVVLIRGGRVKDLPGVRYHIVRGALDTAGVENRAQGRSKYGTKRPKKK.

The disordered stretch occupies residues 33 to 55; that stretch reads KEHTNVSSPQKRGVCTRVGTMTP. Asp-102 bears the 3-methylthioaspartic acid mark.

It belongs to the universal ribosomal protein uS12 family. As to quaternary structure, part of the 30S ribosomal subunit. Contacts proteins S8 and S17. May interact with IF1 in the 30S initiation complex.

In terms of biological role, with S4 and S5 plays an important role in translational accuracy. Functionally, interacts with and stabilizes bases of the 16S rRNA that are involved in tRNA selection in the A site and with the mRNA backbone. Located at the interface of the 30S and 50S subunits, it traverses the body of the 30S subunit contacting proteins on the other side and probably holding the rRNA structure together. The combined cluster of proteins S8, S12 and S17 appears to hold together the shoulder and platform of the 30S subunit. The sequence is that of Small ribosomal subunit protein uS12 from Bacillus licheniformis (strain ATCC 14580 / DSM 13 / JCM 2505 / CCUG 7422 / NBRC 12200 / NCIMB 9375 / NCTC 10341 / NRRL NRS-1264 / Gibson 46).